Consider the following 343-residue polypeptide: Fructose-bisphosphate aldolase (343 aa).

Position 53 (S53) interacts with D-glyceraldehyde 3-phosphate. The active-site Proton donor is D95. Zn(2+)-binding residues include H96, D131, E161, and H212. G213 contributes to the dihydroxyacetone phosphate binding site. Residue H252 participates in Zn(2+) binding. Dihydroxyacetone phosphate-binding positions include 253 to 255 (GGS) and 274 to 277 (NIDT).

It belongs to the class II fructose-bisphosphate aldolase family. It depends on Zn(2+) as a cofactor.

It carries out the reaction beta-D-fructose 1,6-bisphosphate = D-glyceraldehyde 3-phosphate + dihydroxyacetone phosphate. Its pathway is carbohydrate degradation; glycolysis; D-glyceraldehyde 3-phosphate and glycerone phosphate from D-glucose: step 4/4. Its function is as follows. Catalyzes the aldol condensation of dihydroxyacetone phosphate (DHAP or glycerone-phosphate) with glyceraldehyde 3-phosphate (G3P) to form fructose 1,6-bisphosphate (FBP) in gluconeogenesis and the reverse reaction in glycolysis. This chain is Fructose-bisphosphate aldolase (fba), found in Streptomyces coelicolor (strain ATCC BAA-471 / A3(2) / M145).